A 299-amino-acid polypeptide reads, in one-letter code: Taste receptor type 2 member 50 (299 aa).

Position 1 (M1) is a topological domain, extracellular. A helical membrane pass occupies residues 2-22; it reads IPFLHIFFSVLILVLFVLGNF. Residues 23–55 lie on the Cytoplasmic side of the membrane; it reads ANGFIALVNFIDWVKRKKISLADQILTALAVSR. A helical membrane pass occupies residues 56–76; that stretch reads VGLLWALLLNWYLTELNPAFY. Over 77–87 the chain is Extracellular; the sequence is SVELRITSYNA. Residues 88 to 108 traverse the membrane as a helical segment; sequence WVVTNHFSMWLAASLSIFYLL. Over 109 to 126 the chain is Cytoplasmic; that stretch reads KIANFSNLSFLNLKRRVR. Residues 127 to 147 form a helical membrane-spanning segment; that stretch reads SIILVILLGSLLFLVCHLLAV. Topologically, residues 148 to 181 are extracellular; sequence NMDENMWTEEYEGNMTGKMKLRNAAHLSYMTVTT. N-linked (GlcNAc...) asparagine glycosylation is present at N161. The chain crosses the membrane as a helical span at residues 182-202; that stretch reads LWSFIPFMLSLISFLMLIFSL. The Cytoplasmic segment spans residues 203–229; that stretch reads CKHLKKMQLHGEGSRDPSTTVHIKALQ. The helical transmembrane segment at 230–250 threads the bilayer; it reads TLISFLLLCAIFFLFLIISVW. The Extracellular segment spans residues 251–259; the sequence is SPRRLQNEP. The chain crosses the membrane as a helical span at residues 260 to 280; sequence VFMVCKAVGNIYLSFDSFVLI. The Cytoplasmic segment spans residues 281-299; the sequence is WRTKKLKHIFLLILCQIRC.

The protein belongs to the G-protein coupled receptor T2R family.

The protein localises to the membrane. Its function is as follows. Receptor that may play a role in the perception of bitterness and is gustducin-linked. May play a role in sensing the chemical composition of the gastrointestinal content. The activity of this receptor may stimulate alpha gustducin, mediate PLC-beta-2 activation and lead to the gating of TRPM5. This is Taste receptor type 2 member 50 (TAS2R50) from Macaca mulatta (Rhesus macaque).